The chain runs to 267 residues: tRNA-cytidine(32) 2-sulfurtransferase (267 aa).

A PP-loop motif motif is present at residues 37–42 (SGGKDS). [4Fe-4S] cluster is bound by residues C112, C115, and C203.

The protein belongs to the TtcA family. Homodimer. The cofactor is Mg(2+). It depends on [4Fe-4S] cluster as a cofactor.

Its subcellular location is the cytoplasm. It catalyses the reaction cytidine(32) in tRNA + S-sulfanyl-L-cysteinyl-[cysteine desulfurase] + AH2 + ATP = 2-thiocytidine(32) in tRNA + L-cysteinyl-[cysteine desulfurase] + A + AMP + diphosphate + H(+). It participates in tRNA modification. Functionally, catalyzes the ATP-dependent 2-thiolation of cytidine in position 32 of tRNA, to form 2-thiocytidine (s(2)C32). The sulfur atoms are provided by the cysteine/cysteine desulfurase (IscS) system. This Dichelobacter nodosus (strain VCS1703A) protein is tRNA-cytidine(32) 2-sulfurtransferase.